A 159-amino-acid polypeptide reads, in one-letter code: Phosphopantetheine adenylyltransferase (159 aa).

Thr-10 serves as a coordination point for substrate. Residues 10–11 (TF) and His-18 each bind ATP. The substrate site is built by Lys-42, Met-74, and Arg-88. ATP contacts are provided by residues 89–91 (GLR), Glu-99, and 124–130 (WSFISSS).

It belongs to the bacterial CoaD family. In terms of assembly, homohexamer. The cofactor is Mg(2+).

The protein resides in the cytoplasm. The enzyme catalyses (R)-4'-phosphopantetheine + ATP + H(+) = 3'-dephospho-CoA + diphosphate. The protein operates within cofactor biosynthesis; coenzyme A biosynthesis; CoA from (R)-pantothenate: step 4/5. Reversibly transfers an adenylyl group from ATP to 4'-phosphopantetheine, yielding dephospho-CoA (dPCoA) and pyrophosphate. This is Phosphopantetheine adenylyltransferase from Escherichia coli O7:K1 (strain IAI39 / ExPEC).